The chain runs to 389 residues: Nuclear receptor subfamily 2 group F member 1-B (389 aa).

Positions 19-39 (DDQSAAGREHLQHRHSPKSAE) are disordered. Residues 51–126 (HVECVVCGDK…VGMRREAVQR (76 aa)) constitute a DNA-binding region (nuclear receptor). 2 consecutive NR C4-type zinc fingers follow at residues 54-74 (CVVC…CEGC) and 90-109 (CRAN…CQYC). Residues 152–378 (YLSGYISLLL…TLIRDMLLSG (227 aa)) enclose the NR LBD domain.

This sequence belongs to the nuclear hormone receptor family. NR2 subfamily. In terms of tissue distribution, expressed the retina, where expression is restricted to the outer nuclear layer.

Its subcellular location is the nucleus. Putative transcription factor that is required in photoreceptor cells precursors during eye development. This chain is Nuclear receptor subfamily 2 group F member 1-B, found in Danio rerio (Zebrafish).